The following is a 468-amino-acid chain: Sorting and assembly machinery component 50 homolog (468 aa).

The segment at 1 to 24 (MGTVHARSLDPLPMNGPDFGSHDD) is disordered. Residues 44–124 (VVVQRVHFEG…LDVTFEVTEL (81 aa)) enclose the POTRA domain.

It belongs to the SAM50/omp85 family. As to quaternary structure, associates with the mitochondrial contact site and cristae organizing system (MICOS) complex (also known as MINOS or MitOS complex).

The protein resides in the mitochondrion outer membrane. In terms of biological role, may play a role in the maintenance of the structure of mitochondrial cristae. In Xenopus tropicalis (Western clawed frog), this protein is Sorting and assembly machinery component 50 homolog (samm50).